We begin with the raw amino-acid sequence, 350 residues long: Heat-inducible transcription repressor HrcA (350 aa).

The protein belongs to the HrcA family.

Negative regulator of class I heat shock genes (grpE-dnaK-dnaJ and groELS operons). Prevents heat-shock induction of these operons. The protein is Heat-inducible transcription repressor HrcA of Xanthomonas campestris pv. campestris (strain ATCC 33913 / DSM 3586 / NCPPB 528 / LMG 568 / P 25).